Consider the following 388-residue polypeptide: Venom acid phosphatase Acph-1 (388 aa).

The N-terminal stretch at 1-15 is a signal peptide; that stretch reads MSVIAILAMVVGVQA. The active-site Nucleophile is the H26. 2 disulfides stabilise this stretch: C145–C355 and C330–C334. N182 and N228 each carry an N-linked (GlcNAc...) asparagine glycan. The active-site Proton donor is the E273. A glycan (N-linked (GlcNAc...) asparagine) is linked at N366.

The protein belongs to the histidine acid phosphatase family. As to expression, expressed by the venom gland.

The protein resides in the secreted. The catalysed reaction is a phosphate monoester + H2O = an alcohol + phosphate. This is Venom acid phosphatase Acph-1 from Apis mellifera (Honeybee).